The sequence spans 87 residues: Small polypeptide ROTUNDIFOLIA LIKE 2 (87 aa).

A helical membrane pass occupies residues 19–35 (LIPHTSHYILQLVYLHL). Positions 56-87 (GQMGRLNRAFREKRARFYIFRRCVIMLLRWSD) are required for DVL/RTFL small polypeptide activity.

The protein belongs to the DVL/RTFL small polypeptides family.

It is found in the cell membrane. Its function is as follows. Small polypeptide acting as a regulatory molecule which coordinates cellular responses required for differentiation, growth and development, probably by restricting polar cell proliferation in lateral organs. This chain is Small polypeptide ROTUNDIFOLIA LIKE 2, found in Oryza sativa subsp. japonica (Rice).